We begin with the raw amino-acid sequence, 542 residues long: Coiled-coil domain-containing protein 60 (542 aa).

Residues 70–97 (TMLQEETAFKKHQQHLKKLQEEELNKFQ) are a coiled coil. 2 disordered regions span residues 228-284 (ATRK…EEEV) and 334-358 (QTTHKSSERSSTTSGESHIQVTQKK). 2 stretches are compositionally biased toward low complexity: residues 245–261 (SGGSSPQSSMMSVNPSS) and 342–351 (RSSTTSGESH).

This Rattus norvegicus (Rat) protein is Coiled-coil domain-containing protein 60 (Ccdc60).